Reading from the N-terminus, the 333-residue chain is HTH-type transcriptional repressor PurR (333 aa).

Positions 2–56 (ATIKDVAKMAGVSTTTVSHVINKTRFVAKETEQQVLQAIKNLNYSPSAVARSLKV) constitute an HTH lacI-type domain. A DNA-binding region (H-T-H motif) is located at residues 4-23 (IKDVAKMAGVSTTTVSHVIN). A DNA-binding region spans residues 48–56 (SAVARSLKV). Hypoxanthine contacts are provided by Y73, K189, T191, F220, and D274.

In terms of assembly, homodimer.

It participates in purine metabolism; purine nucleotide biosynthesis [regulation]. Its function is as follows. Is the main repressor of the genes involved in the de novo synthesis of purine nucleotides, regulating purB, purC, purEK, purF, purHD, purL, purMN and guaBA expression. PurR is allosterically activated to bind its cognate DNA by binding the purine corepressors, hypoxanthine or guanine, thereby effecting transcription repression. This Histophilus somni (strain 2336) (Haemophilus somnus) protein is HTH-type transcriptional repressor PurR.